The following is a 581-amino-acid chain: Proline--tRNA ligase 1 (581 aa).

This sequence belongs to the class-II aminoacyl-tRNA synthetase family. ProS type 1 subfamily. Homodimer.

It localises to the cytoplasm. The enzyme catalyses tRNA(Pro) + L-proline + ATP = L-prolyl-tRNA(Pro) + AMP + diphosphate. In terms of biological role, catalyzes the attachment of proline to tRNA(Pro) in a two-step reaction: proline is first activated by ATP to form Pro-AMP and then transferred to the acceptor end of tRNA(Pro). As ProRS can inadvertently accommodate and process non-cognate amino acids such as alanine and cysteine, to avoid such errors it has two additional distinct editing activities against alanine. One activity is designated as 'pretransfer' editing and involves the tRNA(Pro)-independent hydrolysis of activated Ala-AMP. The other activity is designated 'posttransfer' editing and involves deacylation of mischarged Ala-tRNA(Pro). The misacylated Cys-tRNA(Pro) is not edited by ProRS. The chain is Proline--tRNA ligase 1 from Rhodococcus jostii (strain RHA1).